Here is a 541-residue protein sequence, read N- to C-terminus: Beta-glucuronidase (541 aa).

The signal sequence occupies residues 1 to 20; that stretch reads MHHHPITLLSLLLGAAQSIA. N-linked (GlcNAc...) asparagine glycosylation is found at Asn-69, Asn-115, and Asn-157. Glu-208 serves as the catalytic Proton donor. N-linked (GlcNAc...) asparagine glycans are attached at residues Asn-217, Asn-291, and Asn-304. The active-site Nucleophile is Glu-324. Residues Asn-380, Asn-426, Asn-441, Asn-483, and Asn-512 are each glycosylated (N-linked (GlcNAc...) asparagine).

This sequence belongs to the glycosyl hydrolase 79 family. N-glycosylated.

The protein resides in the secreted. The catalysed reaction is a beta-D-glucuronoside + H2O = D-glucuronate + an alcohol. Its function is as follows. Beta-glucuronidase that hydrolyzes beta-glucuronosyl and 4-O-methyl-beta-glucuronosyl residues of arabinogalactan-protein. Hydrolyzed heparan sulfate only very weakly. Has no activity on xylan from birchwood. Able to catalyze the transglycosylation of glucuronic acid (GlcA) residues from p-nitrophenyl-beta-glucuronic acid (PNP beta-GlcA) to various monosaccharide acceptors such as glucose, galactose and xylose. This is Beta-glucuronidase from Aspergillus niger (strain ATCC MYA-4892 / CBS 513.88 / FGSC A1513).